Here is a 334-residue protein sequence, read N- to C-terminus: Putative lysine N-acyltransferase C17G9.06c (334 aa).

His248 contacts substrate. The active-site Proton acceptor is the Glu286.

The protein belongs to the lysine N-acyltransferase mbtK family.

It is found in the cytoplasm. The protein localises to the nucleus. This Schizosaccharomyces pombe (strain 972 / ATCC 24843) (Fission yeast) protein is Putative lysine N-acyltransferase C17G9.06c.